The following is a 354-amino-acid chain: Guanine nucleotide-binding protein G(t) subunit alpha-2 (354 aa).

The tract at residues 1–28 is disordered; it reads MGSGISAEDKELARRSKELEKKLQEDAD. The N-myristoyl glycine moiety is linked to residue Gly2. Residues 7 to 28 are compositionally biased toward basic and acidic residues; sequence AEDKELARRSKELEKKLQEDAD. Residues 32-354 form the G-alpha domain; sequence KTVKLLLLGA…KENLKDCGLF (323 aa). Residues 35–48 form a G1 motif region; the sequence is KLLLLGAGESGKST. GTP is bound by residues 40-47, 175-181, 200-204, 269-272, and Ala326; these read GAGESGKS, LRSRVKT, DVGGQ, and NKKD. Residues Ser47 and Thr181 each coordinate Mg(2+). A G2 motif region spans residues 173 to 181; that stretch reads DVLRSRVKT. Residues 196–205 are G3 motif; the sequence is FRMFDVGGQR. A G4 motif region spans residues 265–272; it reads VLFLNKKD. The segment at 324-329 is G5 motif; it reads TCATDT.

It belongs to the G-alpha family. G(i/o/t/z) subfamily. G proteins are composed of 3 units; alpha, beta and gamma. The alpha chain contains the guanine nucleotide binding site. In the retina, expressed in the rod photoreceptors.

It localises to the cell projection. The protein localises to the cilium. The protein resides in the photoreceptor outer segment. Its subcellular location is the photoreceptor inner segment. Its function is as follows. Guanine nucleotide-binding proteins (G proteins) are involved as modulators or transducers in various transmembrane signaling systems. Transducin is an amplifier and one of the transducers of a visual impulse that performs the coupling between rhodopsin and cGMP-phosphodiesterase. The polypeptide is Guanine nucleotide-binding protein G(t) subunit alpha-2 (Gnat2) (Mus musculus (Mouse)).